Reading from the N-terminus, the 452-residue chain is UPF0761 membrane protein Bpet3042 (452 aa).

The next 6 helical transmembrane spans lie at 56–76, 114–134, 153–173, 195–215, 225–245, and 259–279; these read VLGIVPMLAVVLSLFTAFPVF, LTAIGGAFLVVTSLLLIMTID, ALVYWAVVTLGPVVAGASLWA, AISFLPLILTGLGFAALFVVV, ALVGGFGTAIVLELMKAAFAY, and AFATLPIFLLWIYLSWLAVLF.

This sequence belongs to the UPF0761 family.

It is found in the cell inner membrane. This is UPF0761 membrane protein Bpet3042 from Bordetella petrii (strain ATCC BAA-461 / DSM 12804 / CCUG 43448).